A 106-amino-acid polypeptide reads, in one-letter code: ATP-dependent Clp protease adapter protein ClpS (106 aa).

This sequence belongs to the ClpS family. Binds to the N-terminal domain of the chaperone ClpA.

Its function is as follows. Involved in the modulation of the specificity of the ClpAP-mediated ATP-dependent protein degradation. This Edwardsiella ictaluri (strain 93-146) protein is ATP-dependent Clp protease adapter protein ClpS.